A 1685-amino-acid polypeptide reads, in one-letter code: Myomesin-1 (1685 aa).

The tract at residues 33–80 (KKRSAVYTQGSTAYSSRSSAAHRRESEAFRRASASSSQQQASQHALSS) is disordered. Composition is skewed to low complexity over residues 41 to 51 (QGSTAYSSRSS) and 63 to 80 (RASA…ALSS). Ser113 is modified (phosphoserine). Residues 177–244 (GITTSKQSTA…TSEKKSRKVV (68 aa)) are disordered. Residues 179-220 (TTSKQSTASKQTTASKQSTASKQSTASKQSTASRQSTASRQS) are compositionally biased toward low complexity. 6 consecutive repeat copies span residues 182–187 (KQSTAS), 188–193 (KQTTAS), 194–199 (KQSTAS), 200–205 (KQSTAS), 206–211 (KQSTAS), and 212–217 (RQSTAS). A 6 X 6 AA tandem repeats region spans residues 182 to 217 (KQSTASKQTTASKQSTASKQSTASKQSTASRQSTAS). A compositionally biased stretch (polar residues) spans 221-233 (VVSKQATSALQQE). 2 consecutive Ig-like C2-type domains span residues 277–368 (PEFI…ASVV) and 396–498 (PYGY…AYVF). Fibronectin type-III domains are found at residues 512–607 (APLD…ALDP), 640–734 (PPTD…VVGD), and 741–834 (APGK…VKAA). Positions 840 to 938 (SPDVCPALSD…TDRAPPSPPC (99 aa)) are disordered. Residues 874–888 (LLGSKPNKPSLPSSS) show a composition bias toward low complexity. 2 positions are modified to phosphoserine: Ser883 and Ser887. A compositionally biased stretch (polar residues) spans 889-902 (QNLGQTEVSKVSET). Residues 920-931 (SKSDPLKKKTDR) are compositionally biased toward basic and acidic residues. 2 Fibronectin type-III domains span residues 933-1034 (PPSP…CEEW) and 1041-1140 (PPHS…TRPG). Ser1054 is subject to Phosphoserine. 3 consecutive Ig-like C2-type domains span residues 1132 to 1230 (PVVA…EELK), 1358 to 1444 (PHFV…LKLV), and 1573 to 1662 (RVLG…FTVS). Cysteines 1160 and 1210 form a disulfide.

Homodimer. Interacts with TTN/titin. Interacts with PNKD.

The protein resides in the cytoplasm. It is found in the myofibril. It localises to the sarcomere. The protein localises to the m line. Its function is as follows. Major component of the vertebrate myofibrillar M band. Binds myosin, titin, and light meromyosin. This binding is dose dependent. The sequence is that of Myomesin-1 (MYOM1) from Homo sapiens (Human).